A 494-amino-acid chain; its full sequence is Transmembrane and coiled-coil domain-containing protein 6 (494 aa).

Residues 15–39 (GVEELRRRRREREAALRKARREQQL) are a coiled coil. 2 consecutive transmembrane segments (helical) span residues 338–358 (LVAA…ALLP) and 386–406 (PLLQ…TVLC).

The protein resides in the membrane. The protein is Transmembrane and coiled-coil domain-containing protein 6 (Tmco6) of Mus musculus (Mouse).